The sequence spans 134 residues: Holo-[acyl-carrier-protein] synthase (134 aa).

Mg(2+) contacts are provided by D8 and E57.

This sequence belongs to the P-Pant transferase superfamily. AcpS family. The cofactor is Mg(2+).

The protein resides in the cytoplasm. The catalysed reaction is apo-[ACP] + CoA = holo-[ACP] + adenosine 3',5'-bisphosphate + H(+). Transfers the 4'-phosphopantetheine moiety from coenzyme A to a Ser of acyl-carrier-protein. This chain is Holo-[acyl-carrier-protein] synthase, found in Rhizobium etli (strain CIAT 652).